We begin with the raw amino-acid sequence, 1263 residues long: Histone-lysine N-methyltransferase EHMT2 (1263 aa).

Disordered regions lie at residues 1 to 314 (MRGL…LEEW) and 332 to 439 (DERV…EYME). The span at 26-39 (GRGRGGAHRGRGRP) shows a compositional bias: basic residues. The residue at position 40 (Arg40) is an Asymmetric dimethylarginine. A compositionally biased stretch (basic and acidic residues) spans 83-95 (LEKEPRGAAERVH). Ser97 carries the post-translational modification Phosphoserine. Phosphothreonine is present on Thr101. Residues Ser104 and Ser193 each carry the phosphoserine modification. Position 239 is an N6,N6,N6-trimethyllysine; by EHMT2; alternate (Lys239). Lys239 is modified (N6,N6-dimethyllysine; by EHMT2; alternate). Positions 252-270 (PEKRPPEVQHFRMSDDMHL) are enriched in basic and acidic residues. Residues Lys272 and Lys282 each participate in a glycyl lysine isopeptide (Lys-Gly) (interchain with G-Cter in SUMO2) cross-link. Residues Ser285, Ser294, and Ser298 each carry the phosphoserine modification. 2 stretches are compositionally biased toward basic and acidic residues: residues 302-312 (ILEKGEPRPLE) and 332-343 (DERVDSDSKSEV). Residues 350 to 380 (LSEEEEEEEEEEEEEEEEEEEEEEEEEDEES) are compositionally biased toward acidic residues. Over residues 391–400 (GRRKAKKKWR) the composition is skewed to basic residues. Phosphoserine is present on residues Ser403, Ser465, and Ser466. Thr608 carries the post-translational modification Phosphothreonine. The tract at residues 621 to 647 (LAHDAPGRADTSQPSARMRGHGEPRRP) is disordered. Lys687 participates in a covalent cross-link: Glycyl lysine isopeptide (Lys-Gly) (interchain with G-Cter in SUMO2). ANK repeat units follow at residues 702–731 (FHPR…DPNF), 737–766 (SKRT…NINA), 770–799 (QQRT…CVYS), 803–833 (DGST…DVNA), 837–866 (GGWT…DVTL), 870–899 (EENI…DLHA), and 903–932 (HGDT…NPEL). Residues 870–872 (EEN) form a histone H3K9me binding region. The 64-residue stretch at 1025–1088 (QHCTCVDDCS…SCKNRVVQSG (64 aa)) folds into the Pre-SET domain. Zn(2+)-binding residues include Cys1027, Cys1029, Cys1033, Cys1038, Cys1040, Cys1070, Cys1074, Cys1076, and Cys1080. Residues 1091-1208 (VRLQLYRTAK…TGEELGFDYG (118 aa)) form the SET domain. Residues 1101–1103 (MGW), Tyr1138, and 1165–1166 (NH) each bind S-adenosyl-L-methionine. The segment at 1127-1146 (DAEADVREDDSYLFDLDNKD) is interaction with histone H3. Cys1168 serves as a coordination point for Zn(2+). The interval 1207–1210 (YGDR) is interaction with histone H3. A Post-SET domain is found at 1217–1233 (KYFTCQCGSEKCKHSAE). 3 residues coordinate Zn(2+): Cys1221, Cys1223, and Cys1228. Ser1257 carries the post-translational modification Phosphoserine. Thr1263 is modified (phosphothreonine).

It belongs to the class V-like SAM-binding methyltransferase superfamily. Histone-lysine methyltransferase family. Suvar3-9 subfamily. Heterodimer; heterodimerizes with EHMT1/GLP. Interacts with GFI1B and WIZ. Part of the E2F6.com-1 complex in G0 phase composed of E2F6, MGA, MAX, TFDP1, CBX3, BAT8, EHMT1, RING1, RNF2, MBLR, L3MBTL2 and YAF2. Part of a complex composed of TRIM28, HDAC1, HDAC2 and EHMT2. Interacts with UHRF1. Interacts with CDYL. Interacts with REST only in the presence of CDYL. Part of a complex containing at least CDYL, REST, WIZ, SETB1, EHMT1 and EHMT2. Interacts with PRDM9 and CDYL; interaction only takes place when PRDM9 is bound to hotspot DNA. Interacts with SMYD5. Methylated at Lys-239; automethylated. As to expression, ubiquitous.

It localises to the nucleus. The protein localises to the chromosome. It catalyses the reaction N(6)-methyl-L-lysyl(9)-[histone H3] + S-adenosyl-L-methionine = N(6),N(6)-dimethyl-L-lysyl(9)-[histone H3] + S-adenosyl-L-homocysteine + H(+). The enzyme catalyses L-lysyl(9)-[histone H3] + S-adenosyl-L-methionine = N(6)-methyl-L-lysyl(9)-[histone H3] + S-adenosyl-L-homocysteine + H(+). Histone methyltransferase that specifically mono- and dimethylates 'Lys-9' of histone H3 (H3K9me1 and H3K9me2, respectively) in euchromatin. H3K9me represents a specific tag for epigenetic transcriptional repression by recruiting HP1 proteins to methylated histones. Also mediates monomethylation of 'Lys-56' of histone H3 (H3K56me1) in G1 phase, leading to promote interaction between histone H3 and PCNA and regulating DNA replication. Also weakly methylates 'Lys-27' of histone H3 (H3K27me). Also required for DNA methylation, the histone methyltransferase activity is not required for DNA methylation, suggesting that these 2 activities function independently. Probably targeted to histone H3 by different DNA-binding proteins like E2F6, MGA, MAX and/or DP1. May also methylate histone H1. In addition to the histone methyltransferase activity, also methylates non-histone proteins: mediates dimethylation of 'Lys-373' of p53/TP53. Also methylates CDYL, WIZ, ACIN1, DNMT1, HDAC1, ERCC6, KLF12 and itself. This Mus musculus (Mouse) protein is Histone-lysine N-methyltransferase EHMT2 (Ehmt2).